Here is a 204-residue protein sequence, read N- to C-terminus: Phosphoheptose isomerase (204 aa).

Residues 38 to 199 (MAVALARGGK…LFEAVMELGP (162 aa)) enclose the SIS domain. 53–55 (NGG) lines the substrate pocket. 2 residues coordinate Zn(2+): His-62 and Glu-66. Substrate contacts are provided by residues Glu-66, 95 to 96 (ND), 121 to 123 (STS), Ser-126, and Gln-172. Residues Gln-172 and His-180 each contribute to the Zn(2+) site.

This sequence belongs to the SIS family. GmhA subfamily. As to quaternary structure, homotetramer. It depends on Zn(2+) as a cofactor.

The protein resides in the cytoplasm. The enzyme catalyses 2 D-sedoheptulose 7-phosphate = D-glycero-alpha-D-manno-heptose 7-phosphate + D-glycero-beta-D-manno-heptose 7-phosphate. The protein operates within carbohydrate biosynthesis; D-glycero-D-manno-heptose 7-phosphate biosynthesis; D-glycero-alpha-D-manno-heptose 7-phosphate and D-glycero-beta-D-manno-heptose 7-phosphate from sedoheptulose 7-phosphate: step 1/1. Functionally, catalyzes the isomerization of sedoheptulose 7-phosphate in D-glycero-D-manno-heptose 7-phosphate. This chain is Phosphoheptose isomerase, found in Solidesulfovibrio magneticus (strain ATCC 700980 / DSM 13731 / RS-1) (Desulfovibrio magneticus).